Consider the following 225-residue polypeptide: Ribonuclease T (225 aa).

Residues 1–21 (MSEDHFDDEHEGHGGGGGSRH) form a disordered region. Residues 33-207 (VVVDVETGGF…YDTEKTAELF (175 aa)) form the Exonuclease domain. Positions 36, 38, 194, and 199 each coordinate Mg(2+). The active-site Proton donor/acceptor is His194.

Belongs to the RNase T family. Homodimer. Mg(2+) is required as a cofactor.

Its function is as follows. Trims short 3' overhangs of a variety of RNA species, leaving a one or two nucleotide 3' overhang. Responsible for the end-turnover of tRNA: specifically removes the terminal AMP residue from uncharged tRNA (tRNA-C-C-A). Also appears to be involved in tRNA biosynthesis. This chain is Ribonuclease T, found in Pseudomonas syringae pv. syringae (strain B728a).